Consider the following 574-residue polypeptide: Isocitrate dehydrogenase kinase/phosphatase (574 aa).

ATP-binding positions include 311-317 and K332; that span reads APGIRGM. The active site involves D367.

Belongs to the AceK family.

The protein resides in the cytoplasm. It carries out the reaction L-seryl-[isocitrate dehydrogenase] + ATP = O-phospho-L-seryl-[isocitrate dehydrogenase] + ADP + H(+). In terms of biological role, bifunctional enzyme which can phosphorylate or dephosphorylate isocitrate dehydrogenase (IDH) on a specific serine residue. This is a regulatory mechanism which enables bacteria to bypass the Krebs cycle via the glyoxylate shunt in response to the source of carbon. When bacteria are grown on glucose, IDH is fully active and unphosphorylated, but when grown on acetate or ethanol, the activity of IDH declines drastically concomitant with its phosphorylation. The chain is Isocitrate dehydrogenase kinase/phosphatase from Shigella boydii serotype 4 (strain Sb227).